The sequence spans 208 residues: Protein-L-isoaspartate O-methyltransferase (208 aa).

S59 is an active-site residue.

This sequence belongs to the methyltransferase superfamily. L-isoaspartyl/D-aspartyl protein methyltransferase family.

Its subcellular location is the cytoplasm. The catalysed reaction is [protein]-L-isoaspartate + S-adenosyl-L-methionine = [protein]-L-isoaspartate alpha-methyl ester + S-adenosyl-L-homocysteine. Its function is as follows. Catalyzes the methyl esterification of L-isoaspartyl residues in peptides and proteins that result from spontaneous decomposition of normal L-aspartyl and L-asparaginyl residues. It plays a role in the repair and/or degradation of damaged proteins. In Salmonella paratyphi A (strain ATCC 9150 / SARB42), this protein is Protein-L-isoaspartate O-methyltransferase.